Consider the following 36-residue polypeptide: MTDLNLPSIFVPLVGLLFPAIAMVSLFFHVQKNKIV.

The chain crosses the membrane as a helical span at residues L6–F28.

It belongs to the PsaI family.

Its subcellular location is the plastid. It is found in the chloroplast thylakoid membrane. Functionally, may help in the organization of the PsaL subunit. In Nymphaea alba (White water-lily), this protein is Photosystem I reaction center subunit VIII.